A 103-amino-acid polypeptide reads, in one-letter code: Small ribosomal subunit protein uS10 (103 aa).

This sequence belongs to the universal ribosomal protein uS10 family. As to quaternary structure, part of the 30S ribosomal subunit.

In terms of biological role, involved in the binding of tRNA to the ribosomes. In Shewanella baltica (strain OS223), this protein is Small ribosomal subunit protein uS10.